A 744-amino-acid polypeptide reads, in one-letter code: MAADKAADQGAEKHDGAGTSGITDQEKELSSSALQAFLAGNYDACLQHLNTLQDINKDDYKITLNTAVAEFCKSNQTTTDNLRQTLNQLKNQVHSAVEEMDGLDDVENSMLYYNQAVILYHLRQYTEAISVGEKLYQFIEPFEEKFAQAVCFLLVDLYLLTYQAEKALHLLAVLEKMISQGNNNSKNGKNESGNNTNKDSSNQKAESGALIEVAKSKIHQYKVRAYIQMKSLKACKREIKSVMNTAGNSAPSLFLKSNFEYLRGNYRKAVKLLNSANIAEHPGFMKTGECLRCMFWNNLGCIHFAMGKHNLGIFYFKKALQENDNACAQLGTGSSDPGKKFSGRPMCTLLTNKRYELLYNCGIQLLHIGRPLAAFECLIEAVQVYHSNPRLWLRIAECCIAANKGTSEQETKGLPSKKGIVQSIVGQGYHRKIVLASQSIQNVVYNDGQSSAIPVASMEFAAICLRNALLLLPEDQQEPKQENGSKPNNQLGGNTENSESSEACSNKSHEGDKFIAAPPSSPLKKQELENLRCSILACSAYVALALGDNLMALNHADKLLQQPKLSGSLKFLGHLYAAEALISLDRISDAITHLNPENVTDVSLGISSNEQDQGSDKGENEAMESSGKQTPQCYPSSVTSARTMMLFNLGSAYCLRSEYDKARKCLHQAASLIHPKEIPPEAILLAVYLELQNGNTQLALQIIKRNQLLPSVKTLSDMRKKPVFQPVHSLQPIQMPTFTAVQRK.

The span at Met1–Gly16 shows a compositional bias: basic and acidic residues. A disordered region spans residues Met1–Gln25. The stretch at Cys72–Val106 forms a coiled coil. Residues Asn182–Lys198 are compositionally biased toward low complexity. Disordered regions lie at residues Asn182 to Lys204, Gln476 to Ser520, and Val602 to Tyr634. Composition is skewed to polar residues over residues Gly484–Asn506 and Val602–Asp612.

It belongs to the CNOT10 family. In terms of assembly, component of the CCR4-NOT complex. CNOT10 and CNOT11 form a subcomplex docked to the CNOT1 scaffold.

It localises to the cytoplasm. The protein resides in the nucleus. Its function is as follows. Component of the CCR4-NOT complex which is one of the major cellular mRNA deadenylases and is linked to various cellular processes including bulk mRNA degradation, miRNA-mediated repression, translational repression during translational initiation and general transcription regulation. Additional complex functions may be a consequence of its influence on mRNA expression. Is not required for association of CNOT7 to the CCR4-NOT complex. The polypeptide is CCR4-NOT transcription complex subunit 10 (CNOT10) (Gallus gallus (Chicken)).